A 212-amino-acid polypeptide reads, in one-letter code: Adenylate kinase (212 aa).

10 to 15 lines the ATP pocket; that stretch reads GAGKGT. Positions 30-59 are NMP; that stretch reads AIGDIFRTIIKTSTSEAELINNYVRQGELI. AMP contacts are provided by residues R36, 57 to 59, 85 to 88, and Q92; these read ELI and GYPR. An LID region spans residues 122–160; the sequence is GRYSCKNCGKIYNRYFLQPKTDNVCDVCGSSTFDYRKDD. R123 is an ATP binding site. Residues C126 and C129 each coordinate Zn(2+). 132-133 serves as a coordination point for ATP; sequence IY. Zn(2+) is bound by residues C146 and C149. AMP-binding residues include R157 and R168. K196 serves as a coordination point for ATP.

The protein belongs to the adenylate kinase family. In terms of assembly, monomer.

The protein resides in the cytoplasm. It catalyses the reaction AMP + ATP = 2 ADP. It participates in purine metabolism; AMP biosynthesis via salvage pathway; AMP from ADP: step 1/1. Functionally, catalyzes the reversible transfer of the terminal phosphate group between ATP and AMP. Plays an important role in cellular energy homeostasis and in adenine nucleotide metabolism. The chain is Adenylate kinase from Rickettsia peacockii (strain Rustic).